The chain runs to 355 residues: Glycerol-3-phosphate dehydrogenase [NAD(P)+] (355 aa).

Residues S14, W15, R35, and K117 each coordinate NADPH. Sn-glycerol 3-phosphate contacts are provided by K117, G147, and S149. A151 provides a ligand contact to NADPH. Sn-glycerol 3-phosphate is bound by residues K202, D255, S265, R266, and N267. K202 acts as the Proton acceptor in catalysis. R266 lines the NADPH pocket. NADPH-binding residues include I290 and E292.

This sequence belongs to the NAD-dependent glycerol-3-phosphate dehydrogenase family.

Its subcellular location is the cytoplasm. The enzyme catalyses sn-glycerol 3-phosphate + NAD(+) = dihydroxyacetone phosphate + NADH + H(+). The catalysed reaction is sn-glycerol 3-phosphate + NADP(+) = dihydroxyacetone phosphate + NADPH + H(+). It participates in membrane lipid metabolism; glycerophospholipid metabolism. Functionally, catalyzes the reduction of the glycolytic intermediate dihydroxyacetone phosphate (DHAP) to sn-glycerol 3-phosphate (G3P), the key precursor for phospholipid synthesis. The chain is Glycerol-3-phosphate dehydrogenase [NAD(P)+] from Lawsonia intracellularis (strain PHE/MN1-00).